A 636-amino-acid chain; its full sequence is NADP-dependent malic enzyme, chloroplastic (636 aa).

The interval 1 to 28 is disordered; the sequence is MLSTRTAAVAASASPASPWKLGGRSEGG. The transit peptide at 1-62 directs the protein to the chloroplast; sequence MLSTRTAAVA…LPPRRVDAVA (62 aa). Over residues 7 to 18 the composition is skewed to low complexity; sequence AAVAASASPASP. The Proton donor role is filled by Y184. R237 serves as a coordination point for NAD(+). K255 (proton acceptor) is an active-site residue. E327, D328, and D351 together coordinate a divalent metal cation. D351 serves as a coordination point for NAD(+). NADP(+) is bound at residue 380-396; that stretch reads LFLGAGEAGTGIAELIA. An NAD(+)-binding site is contributed by N492.

It belongs to the malic enzymes family. Homotetramer. It depends on Mg(2+) as a cofactor. Requires Mn(2+) as cofactor.

The protein resides in the plastid. It localises to the chloroplast. The catalysed reaction is (S)-malate + NADP(+) = pyruvate + CO2 + NADPH. The enzyme catalyses oxaloacetate + H(+) = pyruvate + CO2. It participates in photosynthesis; C4 acid pathway. Its function is as follows. The chloroplastic ME isoform decarboxylates malate shuttled from neighboring mesophyll cells. The CO(2) released is then refixed by ribulose-bisphosphate carboxylase. This pathway eliminates the photorespiratory loss of CO(2) that occurs in most plants. The sequence is that of NADP-dependent malic enzyme, chloroplastic (MOD1) from Zea mays (Maize).